The primary structure comprises 102 residues: Small ribosomal subunit protein uS14 (102 aa).

Belongs to the universal ribosomal protein uS14 family. In terms of assembly, part of the 30S ribosomal subunit. Contacts proteins S3 and S10.

Functionally, binds 16S rRNA, required for the assembly of 30S particles and may also be responsible for determining the conformation of the 16S rRNA at the A site. The protein is Small ribosomal subunit protein uS14 of Wolbachia pipientis wMel.